The primary structure comprises 1905 residues: Transport and Golgi organization protein 1 homolog (1905 aa).

A signal peptide spans 1-22; it reads MAAAQGLLFWLLLLGPPCRVPG. Over 23 to 1141 the chain is Lumenal; it reads QPEQDPGRRF…EPASVTPLEN (1119 aa). The SH3 domain occupies 45–107; the sequence is MLMYRGEALE…PKDLIQVVHE (63 aa). The segment covering 154-167 has biased composition (basic and acidic residues); sequence SEKVKEKTAQRVEE. 2 disordered regions span residues 154–259 and 313–621; these read SEKV…HEQE and TVGK…IKDR. Residue Asn173 is glycosylated (N-linked (GlcNAc...) asparagine). Over residues 173–190 the composition is skewed to acidic residues; that stretch reads NESDAEPEPGEPNSEESE. Positions 198-208 are enriched in basic and acidic residues; that stretch reads AELRERSEAQK. Polar residues predominate over residues 209–220; it reads SHPQVNSQTGHA. Residues Ser226 and Ser229 each carry the phosphoserine modification. The span at 234–245 shows a compositional bias: basic and acidic residues; that stretch reads LQDKLKVPDSEN. N-linked (GlcNAc...) asparagine glycosylation occurs at Asn246. Residues 246–255 show a composition bias toward polar residues; that stretch reads NKTSNSSQVS. Positions 317-327 are enriched in acidic residues; that stretch reads EEEENKEDFDE. 2 stretches are compositionally biased toward basic and acidic residues: residues 337–366 and 373–386; these read EDTK…KVEE and KKGD…REDT. Residues 392–414 are compositionally biased toward acidic residues; the sequence is MEGEENTDTDLESSDSKEEDDPL. Basic and acidic residues-rich tracts occupy residues 419–436 and 459–480; these read RLGK…KAAD and HMKD…HEVG. A coiled-coil region spans residues 467 to 527; it reads VEEPRRDWVQ…ANQENDLKGA (61 aa). Residues 488-500 show a composition bias toward polar residues; sequence DQAVQGSSQSGHL. A compositionally biased stretch (basic and acidic residues) spans 531–542; that stretch reads ISKEMLHEEKPS. N-linked (GlcNAc...) asparagine glycosylation is present at Asn627. 3 disordered regions span residues 657–908, 1036–1059, and 1085–1118; these read QQGG…PHAP, APPA…QPPL, and PVTR…TPVD. A compositionally biased stretch (basic and acidic residues) spans 669-714; sequence VSEKRELPEEEVTRVTKDASDEGQEVRKTGQTDSIEGRGFRPKEPN. Over residues 715–730 the composition is skewed to acidic residues; the sequence is PEDEDYSPEELLEDEN. Composition is skewed to basic and acidic residues over residues 736 to 751, 766 to 789, 842 to 859, and 868 to 884; these read QSKE…RLDV, TDPE…KNET, SQKK…EGHP, and PGVE…EKFV. Ser873 is modified (phosphoserine). The stretch at 1142 to 1162 is an intramembrane region; the sequence is AIAFIYSLVFHLTKTLLATLP. Residues 1163-1173 lie on the Lumenal side of the membrane; sequence DDVQPGPDFYG. Residues 1174–1194 form a helical membrane-spanning segment; that stretch reads LPWKPVLITASLGIVSFAVFF. At 1195 to 1905 the chain is on the cytoplasmic side; it reads WRTVLAVKSR…DCSPALKQSP (711 aa). The interval 1208 to 1647 is mediates interaction with MIA2; the sequence is VTEQQISEKL…VIVKPMPGRP (440 aa). Positions 1211–1393 form a coiled coil; that stretch reads QQISEKLKNI…SQKDLEVALT (183 aa). The interval 1416 to 1443 is disordered; that stretch reads SESEDQNKGGSESDELANGEVGGDRSEK. Ser1428 bears the Phosphoserine mark. A coiled-coil region spans residues 1484 to 1636; the sequence is NLEDQIKKLE…TQKMAMMQEE (153 aa). Residues 1639 to 1905 are disordered; it reads IVKPMPGRPN…DCSPALKQSP (267 aa). A compositionally biased stretch (polar residues) spans 1647 to 1664; sequence PNTQNPPRRGPLSQNGSF. Ser1663, Ser1675, Ser1703, Ser1724, Ser1738, and Ser1742 each carry phosphoserine. The tract at residues 1748–1905 is proline-rich domain (PRD); mediates interaction with the COPII coat subunits SEC23A and SEC23B; it reads DEGKVSMAAK…DCSPALKQSP (158 aa). Over residues 1776–1806 the composition is skewed to pro residues; the sequence is LLPPIRYGPPPQLCGPFGPRPLPPPFGPGMR. At Arg1781 the chain carries Asymmetric dimethylarginine. An SEC16A-interacting region (SIR); required for its localization to endoplasmic reticulum exit sites and for its interaction with SEC16A region spans residues 1785 to 1845; sequence PPQLCGPFGP…GHAPFRPLGS (61 aa). Basic and acidic residues predominate over residues 1821–1831; sequence GKRDLPLDPRE. Ser1890 and Ser1904 each carry phosphoserine. The segment covering 1891 to 1905 has biased composition (polar residues); that stretch reads QGASQDCSPALKQSP.

This sequence belongs to the MIA/OTOR family. Tango1 subfamily. In terms of assembly, interacts with MIA2. Interacts (via SH3 domain) with COL7A1. Interacts with the COPII coat subunits SEC23A, SEC23B and maybe SEC24C. May interact with APOB and MIA2. Interacts with SEC16A.

The protein resides in the endoplasmic reticulum membrane. In terms of biological role, plays a role in the transport of cargos that are too large to fit into COPII-coated vesicles and require specific mechanisms to be incorporated into membrane-bound carriers and exported from the endoplasmic reticulum. This protein is required for collagen VII (COL7A1) secretion by loading COL7A1 into transport carriers. It may participate in cargo loading of COL7A1 at endoplasmic reticulum exit sites by binding to COPII coat subunits Sec23/24 and guiding SH3-bound COL7A1 into a growing carrier. Does not play a role in global protein secretion and is apparently specific to COL7A1 cargo loading. However, it may participate in secretion of other proteins in cells that do not secrete COL7A1. It is also specifically required for the secretion of lipoproteins by participating in their export from the endoplasmic reticulum. Required for correct assembly of COPII coat components at endoplasmic reticulum exit sites (ERES) and for the localization of SEC16A and membrane-bound ER-resident complexes consisting of MIA2 and PREB/SEC12 to ERES. The sequence is that of Transport and Golgi organization protein 1 homolog from Bos taurus (Bovine).